A 547-amino-acid polypeptide reads, in one-letter code: Vacuolar fusion protein MON1 homolog B (547 aa).

Methionine 1 is modified (N-acetylmethionine). Over residues 1-15 the composition is skewed to low complexity; sequence MEVGGDTAAPAPGGA. The segment at 1–106 is disordered; sequence MEVGGDTAAP…GGDPSDEEWR (106 aa). A phosphoserine mark is found at serine 59 and serine 61.

The protein belongs to the MON1/SAND family. Interacts with CCNT2; down-regulates CCNT2-mediated activation of viral promoters during herpes simplex virus 1/HHV-1 infection. Found in a complex with RMC1, CCZ1 MON1A and MON1B.

This chain is Vacuolar fusion protein MON1 homolog B (MON1B), found in Homo sapiens (Human).